A 151-amino-acid chain; its full sequence is IFN signaling evasion protein OPG029 (151 aa).

This sequence belongs to the orthopoxvirus OPG029 family. As to quaternary structure, interacts with host TANK, TBKBP1 and AZI2; these interactions prevent interferon production. Interacts with host STAT2.

Functionally, prevents establishment of cellular antiviral state by blocking virus-induced phosphorylation and activation of interferon regulatory factors 3/IRF3 and 7/IRF7, transcription factors critical for the induction of interferons alpha and beta. This blockage is produced through the inhibition of host TBK1, by binding host TBK1 adapter proteins TBKBP1 and AZI2, thereby producing a strong inhibition of the phosphorylation and activation of IRF3 and IRF7. Also acts as an inhibitor of the cellular response to type I IFN by interacting with host STAT2. Mechanistically, exerts its inhibitory effect after host ISGF3 complex (composed of STAT1, STAT2 and IRF9) binding to the interferon stimulated response element (ISRE). This Vaccinia virus (strain Western Reserve) (VACV) protein is IFN signaling evasion protein OPG029 (OPG029).